We begin with the raw amino-acid sequence, 163 residues long: Nucleotide-binding protein Acel_0286 (163 aa).

This sequence belongs to the YajQ family.

Its function is as follows. Nucleotide-binding protein. This is Nucleotide-binding protein Acel_0286 from Acidothermus cellulolyticus (strain ATCC 43068 / DSM 8971 / 11B).